A 154-amino-acid chain; its full sequence is Myoglobin (154 aa).

The region spanning 2-148 (GLSDGEWQLV…FRNDMAAKYK (147 aa)) is the Globin domain. Ser-4 carries the post-translational modification Phosphoserine. A nitrite-binding site is contributed by His-65. Position 65 (His-65) interacts with O2. Thr-68 carries the phosphothreonine modification. Position 94 (His-94) interacts with heme b.

The protein belongs to the globin family. Monomeric.

Its subcellular location is the cytoplasm. It localises to the sarcoplasm. The enzyme catalyses Fe(III)-heme b-[protein] + nitric oxide + H2O = Fe(II)-heme b-[protein] + nitrite + 2 H(+). It catalyses the reaction H2O2 + AH2 = A + 2 H2O. Monomeric heme protein which primary function is to store oxygen and facilitate its diffusion within muscle tissues. Reversibly binds oxygen through a pentacoordinated heme iron and enables its timely and efficient release as needed during periods of heightened demand. Depending on the oxidative conditions of tissues and cells, and in addition to its ability to bind oxygen, it also has a nitrite reductase activity whereby it regulates the production of bioactive nitric oxide. Under stress conditions, like hypoxia and anoxia, it also protects cells against reactive oxygen species thanks to its pseudoperoxidase activity. The polypeptide is Myoglobin (MB) (Ornithorhynchus anatinus (Duckbill platypus)).